We begin with the raw amino-acid sequence, 529 residues long: Chromosomal replication initiator protein DnaA (529 aa).

The interval 1 to 72 is domain I, interacts with DnaA modulators; the sequence is MQDFWHAASA…SLACDYWEAT (72 aa). The segment at 72 to 192 is domain II; sequence TVDVQFVLDP…HVDDSVHERS (121 aa). A domain III, AAA+ region region spans residues 193–409; sequence RLNQILTFDN…GALRKILAYS (217 aa). Residues G237, G239, K240, and T241 each coordinate ATP. Residues 410 to 529 are domain IV, binds dsDNA; the sequence is NFHGKEITIE…LHVLEQTLKG (120 aa).

This sequence belongs to the DnaA family. In terms of assembly, oligomerizes as a right-handed, spiral filament on DNA at oriC.

It is found in the cytoplasm. In terms of biological role, plays an essential role in the initiation and regulation of chromosomal replication. ATP-DnaA binds to the origin of replication (oriC) to initiate formation of the DNA replication initiation complex once per cell cycle. Binds the DnaA box (a 9 base pair repeat at the origin) and separates the double-stranded (ds)DNA. Forms a right-handed helical filament on oriC DNA; dsDNA binds to the exterior of the filament while single-stranded (ss)DNA is stabiized in the filament's interior. The ATP-DnaA-oriC complex binds and stabilizes one strand of the AT-rich DNA unwinding element (DUE), permitting loading of DNA polymerase. After initiation quickly degrades to an ADP-DnaA complex that is not apt for DNA replication. Binds acidic phospholipids. The chain is Chromosomal replication initiator protein DnaA from Ralstonia pickettii (strain 12J).